We begin with the raw amino-acid sequence, 113 residues long: Large ribosomal subunit protein bL17 (113 aa).

This sequence belongs to the bacterial ribosomal protein bL17 family. Part of the 50S ribosomal subunit. Contacts protein L32.

This chain is Large ribosomal subunit protein bL17, found in Clostridium botulinum (strain ATCC 19397 / Type A).